A 608-amino-acid chain; its full sequence is Membrane protein insertase YidC (608 aa).

The helical transmembrane segment at 8–28 (LLLATALSFLVILGWYFFFPP) threads the bilayer. The tract at residues 33–61 (PQPATEVTETAPQGDTTAPAAAPSAGAAT) is disordered. 5 helical membrane passes run 378 to 398 (MGVAIIALTFLLKILVFPLAY), 448 to 468 (LPILIQIPIFFSLYKVIFVTL), 482 to 502 (LSVPDPTSLFNLFGLLPWAAP), 506 to 526 (SLLSLVFIGILPILLGVSMWV), and 542 to 562 (IFAWMPWVFMFMLGGFASGLV).

This sequence belongs to the OXA1/ALB3/YidC family. Type 1 subfamily. Interacts with the Sec translocase complex via SecD. Specifically interacts with transmembrane segments of nascent integral membrane proteins during membrane integration.

The protein resides in the cell inner membrane. Its function is as follows. Required for the insertion and/or proper folding and/or complex formation of integral membrane proteins into the membrane. Involved in integration of membrane proteins that insert both dependently and independently of the Sec translocase complex, as well as at least some lipoproteins. Aids folding of multispanning membrane proteins. This chain is Membrane protein insertase YidC, found in Ruegeria sp. (strain TM1040) (Silicibacter sp.).